Reading from the N-terminus, the 179-residue chain is Large ribosomal subunit protein uL5 (179 aa).

Belongs to the universal ribosomal protein uL5 family. As to quaternary structure, part of the 50S ribosomal subunit; part of the 5S rRNA/L5/L18/L25 subcomplex. Contacts the 5S rRNA and the P site tRNA. Forms a bridge to the 30S subunit in the 70S ribosome.

Its function is as follows. This is one of the proteins that bind and probably mediate the attachment of the 5S RNA into the large ribosomal subunit, where it forms part of the central protuberance. In the 70S ribosome it contacts protein S13 of the 30S subunit (bridge B1b), connecting the 2 subunits; this bridge is implicated in subunit movement. Contacts the P site tRNA; the 5S rRNA and some of its associated proteins might help stabilize positioning of ribosome-bound tRNAs. The polypeptide is Large ribosomal subunit protein uL5 (Synechococcus sp. (strain CC9605)).